The primary structure comprises 164 residues: Cell division protein SepF (164 aa).

The segment at 29–57 (INKGRGASQQEYDEYYEDSTPTVTQKEDP) is disordered.

The protein belongs to the SepF family. In terms of assembly, homodimer. Interacts with FtsZ.

Its subcellular location is the cytoplasm. Functionally, cell division protein that is part of the divisome complex and is recruited early to the Z-ring. Probably stimulates Z-ring formation, perhaps through the cross-linking of FtsZ protofilaments. Its function overlaps with FtsA. This Exiguobacterium sibiricum (strain DSM 17290 / CCUG 55495 / CIP 109462 / JCM 13490 / 255-15) protein is Cell division protein SepF.